A 413-amino-acid chain; its full sequence is Putative competence-damage inducible protein (413 aa).

This sequence belongs to the CinA family.

This chain is Putative competence-damage inducible protein, found in Thermoanaerobacter pseudethanolicus (strain ATCC 33223 / 39E) (Clostridium thermohydrosulfuricum).